The sequence spans 465 residues: Cysteine--tRNA ligase (465 aa).

C27 contacts Zn(2+). The short motif at 29–39 (PTVYNFFHIGN) is the 'HIGH' region element. Zn(2+) is bound by residues C207, H232, and E236. The 'KMSKS' region motif lies at 264-268 (KMSKS). Residue K267 coordinates ATP.

It belongs to the class-I aminoacyl-tRNA synthetase family. Monomer. Requires Zn(2+) as cofactor.

It is found in the cytoplasm. It carries out the reaction tRNA(Cys) + L-cysteine + ATP = L-cysteinyl-tRNA(Cys) + AMP + diphosphate. This Clostridium botulinum (strain Loch Maree / Type A3) protein is Cysteine--tRNA ligase.